Consider the following 393-residue polypeptide: Diphosphomevalonate decarboxylase (393 aa).

(R)-5-diphosphomevalonate is bound by residues 21–24 (YWGK), R77, 156–161 (SGSACR), and T212.

The protein belongs to the diphosphomevalonate decarboxylase family. Homodimer.

It is found in the cytoplasm. The protein localises to the nucleus. The enzyme catalyses (R)-5-diphosphomevalonate + ATP = isopentenyl diphosphate + ADP + phosphate + CO2. The protein operates within isoprenoid biosynthesis; isopentenyl diphosphate biosynthesis via mevalonate pathway; isopentenyl diphosphate from (R)-mevalonate: step 3/3. Its function is as follows. Diphosphomevalonate decarboxylase; part of the second module of ergosterol biosynthesis pathway that includes the middle steps of the pathway. Mvd1 converts diphosphomevalonate into isopentenyl diphosphate. The second module is carried out in the vacuole and involves the formation of farnesyl diphosphate, which is also an important intermediate in the biosynthesis of ubiquinone, dolichol, heme and prenylated proteins. Activity by the mevalonate kinase erg12 first converts mevalonate into 5-phosphomevalonate. 5-phosphomevalonate is then further converted to 5-diphosphomevalonate by the phosphomevalonate kinase erg8. The diphosphomevalonate decarboxylase mvd1 then produces isopentenyl diphosphate. The isopentenyl-diphosphate delta-isomerase idi1 then catalyzes the 1,3-allylic rearrangement of the homoallylic substrate isopentenyl (IPP) to its highly electrophilic allylic isomer, dimethylallyl diphosphate (DMAPP). Finally the farnesyl diphosphate synthase fps1 catalyzes the sequential condensation of isopentenyl pyrophosphate with dimethylallyl pyrophosphate, and then with the resultant geranylpyrophosphate to the ultimate product farnesyl pyrophosphate. In Schizosaccharomyces pombe (strain 972 / ATCC 24843) (Fission yeast), this protein is Diphosphomevalonate decarboxylase (mvd1).